Reading from the N-terminus, the 453-residue chain is tRNA(Ile)-lysidine synthase (453 aa).

27–32 (SGGSDS) contacts ATP.

The protein belongs to the tRNA(Ile)-lysidine synthase family.

Its subcellular location is the cytoplasm. The enzyme catalyses cytidine(34) in tRNA(Ile2) + L-lysine + ATP = lysidine(34) in tRNA(Ile2) + AMP + diphosphate + H(+). Its function is as follows. Ligates lysine onto the cytidine present at position 34 of the AUA codon-specific tRNA(Ile) that contains the anticodon CAU, in an ATP-dependent manner. Cytidine is converted to lysidine, thus changing the amino acid specificity of the tRNA from methionine to isoleucine. In Rhizobium meliloti (strain 1021) (Ensifer meliloti), this protein is tRNA(Ile)-lysidine synthase.